An 822-amino-acid chain; its full sequence is Valine--tRNA ligase (822 aa).

Positions 41 to 51 (PNVTGQLHLGH) match the 'HIGH' region motif. The short motif at 511–515 (KMSKS) is the 'KMSKS' region element. Lys514 contacts ATP. Positions 765–822 (EQKGRELKEIQFLKSEILRAEKILTNKGFLEKAPREKIDLERTKLEKLKEKLAFYEKK) form a coiled coil.

This sequence belongs to the class-I aminoacyl-tRNA synthetase family. ValS type 1 subfamily. In terms of assembly, monomer.

Its subcellular location is the cytoplasm. The enzyme catalyses tRNA(Val) + L-valine + ATP = L-valyl-tRNA(Val) + AMP + diphosphate. Functionally, catalyzes the attachment of valine to tRNA(Val). As ValRS can inadvertently accommodate and process structurally similar amino acids such as threonine, to avoid such errors, it has a 'posttransfer' editing activity that hydrolyzes mischarged Thr-tRNA(Val) in a tRNA-dependent manner. The polypeptide is Valine--tRNA ligase (Mesomycoplasma hyopneumoniae (strain 232) (Mycoplasma hyopneumoniae)).